The following is a 606-amino-acid chain: Ectonucleoside triphosphate diphosphohydrolase 7 (606 aa).

Residues 1–28 (MARISFSYLCPASWYFTVPTVSPFLRQR) are Cytoplasmic-facing. Residues 29–49 (VAFLGLFFIPCVLLLLLIMDL) traverse the membrane as a helical segment. At 50–548 (RHWATSLPRD…PAHGSWLRLS (499 aa)) the chain is on the vesicular side. The active-site Proton acceptor is the Glu217. The N-linked (GlcNAc...) asparagine glycan is linked to Asn330. Cys448 and Cys477 are joined by a disulfide. Residues 549–569 (FVYNHYLFFACTLVVLLAIVL) traverse the membrane as a helical segment. Topologically, residues 570–606 (YLLRIHRIHRRQTRASAPLDLLWIEQVVPMIGVQVGP) are cytoplasmic.

The protein belongs to the GDA1/CD39 NTPase family. The cofactor is Ca(2+). Requires Mg(2+) as cofactor. Widely expressed. Expressed at high level in brain, kidney, liver, testis and small intestin. Weakly expressed in lung, thymus and heart.

Its subcellular location is the cytoplasmic vesicle membrane. The catalysed reaction is a ribonucleoside 5'-triphosphate + H2O = a ribonucleoside 5'-diphosphate + phosphate + H(+). The enzyme catalyses UTP + H2O = UDP + phosphate + H(+). It carries out the reaction GTP + H2O = GDP + phosphate + H(+). It catalyses the reaction CTP + H2O = CDP + phosphate + H(+). The catalysed reaction is ATP + H2O = ADP + phosphate + H(+). Functionally, catalyzes the hydrolysis of nucleoside triphosphates and diphosphates in a calcium- or magnesium-dependent manner. Preferentially hydrolyzes nucleoside 5'-triphosphates, with substrate preference for UTP &gt; GTP &gt; CTP. Hydrolyzes nucleoside diphosphates only to a minor extent. In contrast to its human ortholog is able to hydrolyze ATP. In the epithelial cells of small intestine controls luminal ATP levels, therefore regulating Th17-cell development. In Mus musculus (Mouse), this protein is Ectonucleoside triphosphate diphosphohydrolase 7 (Entpd7).